The chain runs to 669 residues: Galactocerebrosidase (669 aa).

Positions 1–26 (MTAAAGSAGHAAVPLLLCALLVPGGA) are cleaved as a signal peptide. Substrate is bound by residues Thr-93, Trp-135, and Asn-181. The active-site Proton donor/acceptor is the Glu-182. The Nucleophile role is filled by Glu-258. Cys-271 and Cys-378 are oxidised to a cystine. An N-linked (GlcNAc...) asparagine glycan is attached at Asn-363. Arg-380 is a binding site for substrate. Asn-387, Asn-543, and Asn-586 each carry an N-linked (GlcNAc...) asparagine glycan.

Belongs to the glycosyl hydrolase 59 family.

The protein resides in the lysosome. The enzyme catalyses a beta-D-galactosyl-(1&lt;-&gt;1')-N-acylsphing-4-enine + H2O = an N-acylsphing-4-enine + D-galactose. The catalysed reaction is beta-D-galactosyl-(1&lt;-&gt;1)-sphing-4-enine + H2O = sphing-4-enine + D-galactose. It carries out the reaction a D-galactosylceramide + H2O = an N-acyl-sphingoid base + D-galactose. Functionally, hydrolyzes the galactose ester bonds of glycolipids such as galactosylceramide and galactosylsphingosine. Enzyme with very low activity responsible for the lysosomal catabolism of galactosylceramide, a major lipid in myelin, kidney and epithelial cells of small intestine and colon. The polypeptide is Galactocerebrosidase (Canis lupus familiaris (Dog)).